The primary structure comprises 566 residues: Sister chromatid cohesion protein 1 (566 aa).

At Ser161 the chain carries Phosphoserine. Ser175 carries the post-translational modification Phosphoserine; by CDC5. Lys210 carries the N6-acetyllysine; by ECO1 modification. Residue Ser263 is modified to Phosphoserine; by CDC5. Residue Ser307 is modified to Phosphoserine. The interval 325–356 is disordered; sequence SIQIDEETENSESIASSNTYKEERSNNLLTPQ. Thr354 bears the Phosphothreonine mark.

This sequence belongs to the rad21 family. As to quaternary structure, interacts directly with IRR1/SCC3 in cohesin complex. Cohesin complexes are composed of the SMC1 and SMC3 heterodimer attached via their hinge domain, MCD1/SCC1 which link them, and IRR1, which interacts with MCD1. The cohesin complex also interacts with SCC2, which is required for its association with chromosomes. Cleaved by ESP1 at the onset of anaphase. Post-translationally, phosphorylated by CDC5/Polo-like kinase at the onset of anaphase. Phosphorylation takes places at proximity to cleavage sites and is required for an efficient cleavage by ESP1. In terms of processing, acetylated by ECO1.

The protein localises to the nucleus. It localises to the chromosome. Its subcellular location is the centromere. Its function is as follows. Cleavable component of the cohesin complex involved in chromosome cohesion during cell cycle. The cohesin complex is required for the cohesion of sister chromatids after DNA replication. The cohesin complex apparently forms a large proteinaceous ring within which sister chromatids can be trapped. At metaphase-anaphase transition, this protein is cleaved by ESP1 and dissociates from chromatin, allowing sister chromatids to segregate. The protein is Sister chromatid cohesion protein 1 (MCD1) of Saccharomyces cerevisiae (strain ATCC 204508 / S288c) (Baker's yeast).